Here is a 334-residue protein sequence, read N- to C-terminus: GTP 3',8-cyclase (334 aa).

One can recognise a Radical SAM core domain in the interval 13–239 (RFHRKFYYLR…KVKAVNDGPA (227 aa)). Position 22 (Arg22) interacts with GTP. Cys29 and Cys33 together coordinate [4Fe-4S] cluster. Tyr35 lines the S-adenosyl-L-methionine pocket. Cys36 is a binding site for [4Fe-4S] cluster. Arg73 lines the GTP pocket. Gly77 is an S-adenosyl-L-methionine binding site. A GTP-binding site is contributed by Thr104. Ser128 is an S-adenosyl-L-methionine binding site. A GTP-binding site is contributed by Lys165. Met199 contributes to the S-adenosyl-L-methionine binding site. Residues Cys262 and Cys265 each coordinate [4Fe-4S] cluster. 267–269 (RLR) contributes to the GTP binding site. Residue Cys279 participates in [4Fe-4S] cluster binding.

Belongs to the radical SAM superfamily. MoaA family. As to quaternary structure, monomer and homodimer. [4Fe-4S] cluster is required as a cofactor.

The enzyme catalyses GTP + AH2 + S-adenosyl-L-methionine = (8S)-3',8-cyclo-7,8-dihydroguanosine 5'-triphosphate + 5'-deoxyadenosine + L-methionine + A + H(+). Its pathway is cofactor biosynthesis; molybdopterin biosynthesis. Catalyzes the cyclization of GTP to (8S)-3',8-cyclo-7,8-dihydroguanosine 5'-triphosphate. This chain is GTP 3',8-cyclase, found in Vibrio atlanticus (strain LGP32) (Vibrio splendidus (strain Mel32)).